The sequence spans 261 residues: Ribonuclease PH (261 aa).

Phosphate-binding positions include Arg-87 and 125–127; that span reads GTR.

This sequence belongs to the RNase PH family. In terms of assembly, homohexameric ring arranged as a trimer of dimers.

The enzyme catalyses tRNA(n+1) + phosphate = tRNA(n) + a ribonucleoside 5'-diphosphate. Functionally, phosphorolytic 3'-5' exoribonuclease that plays an important role in tRNA 3'-end maturation. Removes nucleotide residues following the 3'-CCA terminus of tRNAs; can also add nucleotides to the ends of RNA molecules by using nucleoside diphosphates as substrates, but this may not be physiologically important. Probably plays a role in initiation of 16S rRNA degradation (leading to ribosome degradation) during starvation. The sequence is that of Ribonuclease PH from Caldanaerobacter subterraneus subsp. tengcongensis (strain DSM 15242 / JCM 11007 / NBRC 100824 / MB4) (Thermoanaerobacter tengcongensis).